Consider the following 261-residue polypeptide: Vacuolar protein sorting-associated protein 37D (261 aa).

The VPS37 C-terminal domain occupies 93-182; that stretch reads AENCADKLQR…RRRERSAQPA (90 aa). Residues 172–261 form a disordered region; that stretch reads LRRRERSAQP…RPSQPEPPHR (90 aa). The span at 181-195 shows a compositional bias: low complexity; sequence PAPTTAAAAAAAATA. Composition is skewed to pro residues over residues 215–224 and 231–261; these read GPPPAVPRSL and PVPP…PPHR.

Belongs to the VPS37 family. As to quaternary structure, component of the ESCRT-I complex (endosomal sorting complex required for transport I) which consists of TSG101, VPS28, a VPS37 protein (VPS37A to -D) and MVB12A or MVB12B in a 1:1:1:1 stoichiometry. Interacts with TSG101 and MVB12A. Component of the ESCRT-I complex (endosomal sorting complex required for transport I) which consists of TSG101, VPS28, a VPS37 protein (VPS37A to -D) and UBAP1 in a 1:1:1:1 stoichiometry.

Its subcellular location is the late endosome membrane. Functionally, component of the ESCRT-I complex, a regulator of vesicular trafficking process. Required for the sorting of endocytic ubiquitinated cargos into multivesicular bodies. May be involved in cell growth and differentiation. This chain is Vacuolar protein sorting-associated protein 37D, found in Mus musculus (Mouse).